Consider the following 294-residue polypeptide: Shikimate dehydrogenase (NADP(+)) (294 aa).

Shikimate is bound by residues 14 to 16 (SKS) and Thr-61. The active-site Proton acceptor is the Lys-65. Residue Asp-77 participates in NADP(+) binding. Shikimate-binding residues include Asn-86 and Asp-102. NADP(+)-binding positions include 140-144 (GSGGA) and Leu-235. Position 237 (Tyr-237) interacts with shikimate. Gly-259 is an NADP(+) binding site.

It belongs to the shikimate dehydrogenase family. Homodimer.

It carries out the reaction shikimate + NADP(+) = 3-dehydroshikimate + NADPH + H(+). It participates in metabolic intermediate biosynthesis; chorismate biosynthesis; chorismate from D-erythrose 4-phosphate and phosphoenolpyruvate: step 4/7. Functionally, involved in the biosynthesis of the chorismate, which leads to the biosynthesis of aromatic amino acids. Catalyzes the reversible NADPH linked reduction of 3-dehydroshikimate (DHSA) to yield shikimate (SA). The polypeptide is Shikimate dehydrogenase (NADP(+)) (Blochmanniella floridana).